A 278-amino-acid polypeptide reads, in one-letter code: 4-deoxy-L-threo-5-hexosulose-uronate ketol-isomerase (278 aa).

Residues H196, H198, E203, and H245 each coordinate Zn(2+).

This sequence belongs to the KduI family. Requires Zn(2+) as cofactor.

The catalysed reaction is 5-dehydro-4-deoxy-D-glucuronate = 3-deoxy-D-glycero-2,5-hexodiulosonate. It functions in the pathway glycan metabolism; pectin degradation; 2-dehydro-3-deoxy-D-gluconate from pectin: step 4/5. Catalyzes the isomerization of 5-dehydro-4-deoxy-D-glucuronate to 3-deoxy-D-glycero-2,5-hexodiulosonate. The protein is 4-deoxy-L-threo-5-hexosulose-uronate ketol-isomerase of Paraburkholderia phytofirmans (strain DSM 17436 / LMG 22146 / PsJN) (Burkholderia phytofirmans).